Reading from the N-terminus, the 307-residue chain is Pantothenate kinase (307 aa).

ATP is bound at residue 90 to 97 (GSVAVGKS).

The protein belongs to the prokaryotic pantothenate kinase family.

It is found in the cytoplasm. It catalyses the reaction (R)-pantothenate + ATP = (R)-4'-phosphopantothenate + ADP + H(+). It functions in the pathway cofactor biosynthesis; coenzyme A biosynthesis; CoA from (R)-pantothenate: step 1/5. This chain is Pantothenate kinase, found in Limosilactobacillus reuteri subsp. reuteri (strain JCM 1112) (Lactobacillus reuteri).